The following is a 284-amino-acid chain: Protease HtpX (284 aa).

2 consecutive transmembrane segments (helical) span residues 4–24 (ILLF…ILSL) and 33–53 (MGLL…SLLM). Residue His-139 participates in Zn(2+) binding. The active site involves Glu-140. His-143 provides a ligand contact to Zn(2+). Helical transmembrane passes span 147 to 167 (GDMV…IFAA) and 187 to 207 (IYFL…SMIA). Position 215 (Glu-215) interacts with Zn(2+).

Belongs to the peptidase M48B family. Zn(2+) is required as a cofactor.

Its subcellular location is the cell inner membrane. The polypeptide is Protease HtpX (Mannheimia succiniciproducens (strain KCTC 0769BP / MBEL55E)).